Reading from the N-terminus, the 156-residue chain is Ribosome maturation factor RimP (156 aa).

It belongs to the RimP family.

The protein localises to the cytoplasm. Required for maturation of 30S ribosomal subunits. This chain is Ribosome maturation factor RimP, found in Synechococcus sp. (strain JA-2-3B'a(2-13)) (Cyanobacteria bacterium Yellowstone B-Prime).